The primary structure comprises 494 residues: Anthranilate synthase component 1 (494 aa).

L-tryptophan is bound by residues serine 52 and 274 to 276; that span reads PYM. 309-310 serves as a coordination point for chorismate; that stretch reads GT. Glutamate 336 serves as a coordination point for Mg(2+). Chorismate contacts are provided by residues tyrosine 424, arginine 444, 458–460, and glycine 460; that span reads GAG. Glutamate 473 lines the Mg(2+) pocket.

The protein belongs to the anthranilate synthase component I family. In terms of assembly, heterotetramer consisting of two non-identical subunits: a beta subunit (TrpG) and a large alpha subunit (TrpE). It depends on Mg(2+) as a cofactor.

It carries out the reaction chorismate + L-glutamine = anthranilate + pyruvate + L-glutamate + H(+). The protein operates within amino-acid biosynthesis; L-tryptophan biosynthesis; L-tryptophan from chorismate: step 1/5. With respect to regulation, feedback inhibited by tryptophan. Functionally, part of a heterotetrameric complex that catalyzes the two-step biosynthesis of anthranilate, an intermediate in the biosynthesis of L-tryptophan. In the first step, the glutamine-binding beta subunit (TrpG) of anthranilate synthase (AS) provides the glutamine amidotransferase activity which generates ammonia as a substrate that, along with chorismate, is used in the second step, catalyzed by the large alpha subunit of AS (TrpE) to produce anthranilate. In the absence of TrpG, TrpE can synthesize anthranilate directly from chorismate and high concentrations of ammonia. This Aquifex aeolicus (strain VF5) protein is Anthranilate synthase component 1 (trpE).